The primary structure comprises 96 residues: Putative pterin-4-alpha-carbinolamine dehydratase (96 aa).

The protein belongs to the pterin-4-alpha-carbinolamine dehydratase family.

It catalyses the reaction (4aS,6R)-4a-hydroxy-L-erythro-5,6,7,8-tetrahydrobiopterin = (6R)-L-erythro-6,7-dihydrobiopterin + H2O. This Paraburkholderia phytofirmans (strain DSM 17436 / LMG 22146 / PsJN) (Burkholderia phytofirmans) protein is Putative pterin-4-alpha-carbinolamine dehydratase.